Here is a 426-residue protein sequence, read N- to C-terminus: MLRLDSSDDKQHLVIRSAGGRGKAAEYSFGIEEEYFLADRRSLDVAIQTPNELFESANWSTGGQAMREMLQSQLEVATNVHVDVNDAREELRFLRREVANVAAQYGFVIMACGTHPTAVWRMSQPSPKPRYEEMIEDLRSIGHRNMMCGMHVHVQLPDPEKRMAVMRAMLPHLPLFIALSASSPFWNSHKTGLKGYRLAAYSELPRTGLPELFESRHDYDEYVGALQRSGVIPDESHIWWAMRPSMKHPTLELRAPDTCTFVDDAVAIASLYRCLTRHLYRRPHLSKTVTVVERAIAVENKWRAQRYGTDCIFASKDGPITISELLSRLIDDIVEDADALNCAAEVEHCRTIVERGSSAEFQLRAYRENGNDIAAVSRWIAASTISGRALRSDAPRLRRHSARASFGNDNGIPEFAVSRAVSWRKA.

This sequence belongs to the glutamate--cysteine ligase type 2 family. YbdK subfamily.

It carries out the reaction L-cysteine + L-glutamate + ATP = gamma-L-glutamyl-L-cysteine + ADP + phosphate + H(+). In terms of biological role, ATP-dependent carboxylate-amine ligase which exhibits weak glutamate--cysteine ligase activity. The sequence is that of Putative glutamate--cysteine ligase 2 from Bradyrhizobium diazoefficiens (strain JCM 10833 / BCRC 13528 / IAM 13628 / NBRC 14792 / USDA 110).